A 393-amino-acid chain; its full sequence is S-adenosylmethionine synthase (393 aa).

H16 lines the ATP pocket. Mg(2+) is bound at residue D18. Residue E44 coordinates K(+). 2 residues coordinate L-methionine: E57 and Q100. The segment at 100 to 110 (QSNDIAQGVDH) is flexible loop. ATP contacts are provided by residues 167–169 (DAK), 238–239 (RF), D247, 253–254 (RK), A270, and K274. D247 contacts L-methionine. An L-methionine-binding site is contributed by K278.

Belongs to the AdoMet synthase family. As to quaternary structure, homotetramer; dimer of dimers. Mg(2+) is required as a cofactor. Requires K(+) as cofactor.

The protein resides in the cytoplasm. It catalyses the reaction L-methionine + ATP + H2O = S-adenosyl-L-methionine + phosphate + diphosphate. It functions in the pathway amino-acid biosynthesis; S-adenosyl-L-methionine biosynthesis; S-adenosyl-L-methionine from L-methionine: step 1/1. In terms of biological role, catalyzes the formation of S-adenosylmethionine (AdoMet) from methionine and ATP. The overall synthetic reaction is composed of two sequential steps, AdoMet formation and the subsequent tripolyphosphate hydrolysis which occurs prior to release of AdoMet from the enzyme. This chain is S-adenosylmethionine synthase, found in Leptothrix cholodnii (strain ATCC 51168 / LMG 8142 / SP-6) (Leptothrix discophora (strain SP-6)).